A 75-amino-acid polypeptide reads, in one-letter code: Small ribosomal subunit protein bS18 (75 aa).

It belongs to the bacterial ribosomal protein bS18 family. As to quaternary structure, part of the 30S ribosomal subunit. Forms a tight heterodimer with protein bS6.

In terms of biological role, binds as a heterodimer with protein bS6 to the central domain of the 16S rRNA, where it helps stabilize the platform of the 30S subunit. This is Small ribosomal subunit protein bS18 from Glaesserella parasuis serovar 5 (strain SH0165) (Haemophilus parasuis).